A 229-amino-acid chain; its full sequence is uncharacterized protein (229 aa).

Positions 2–229 constitute an ABC transporter domain; that stretch reads LTLNNISKSY…LDERGDISHA (228 aa). 38–45 contacts ATP; sequence GPSGSGKS.

It belongs to the ABC transporter superfamily.

This is an uncharacterized protein from Bacillus subtilis (strain 168).